A 188-amino-acid chain; its full sequence is Probable manganese efflux pump MntP (188 aa).

A run of 6 helical transmembrane segments spans residues 3 to 23, 41 to 61, 66 to 86, 106 to 128, 143 to 163, and 168 to 188; these read YTATVLLAFGMSMDAFAASIG, LIFGAVETLTPLIGWGLGILA, LEWNHWIAFVLLIFLGGRMII, WLLVTTAIATSLDAMAVGVGLAF, ATLIMSTLGMMIGRFIGPMLG, and ILGGVVLIGIGVQILWTHFHG.

It belongs to the MntP (TC 9.B.29) family.

It localises to the cell inner membrane. Its function is as follows. Probably functions as a manganese efflux pump. The sequence is that of Probable manganese efflux pump MntP from Salmonella heidelberg (strain SL476).